The following is a 318-amino-acid chain: MFMVNLLLLIIPALIAMAFLTLTERKILGYMQFRKGPNIVGPYGMLQPIADAMKLFMKEPLLPTTSASTLYMTAPTLALSIALLMWSPLPMPHPLINFNLGLLFMLATSSLAVYSILWSGWASNSNYALIGALRAVAQTISYEVTLAIILLSTLLMSGSFNLQSLITTQEHSWLLLPSWPMAMMWFTSTLAETNRAPFDLTEGESELVSGFNIEYAAGSFALFFMAEYMNIIMMNALTTTIFLAMPYNMASSELYTMNFMTKTLLLTTLFLWIRTAYPRFRYDQLMHLLWKKFLPLTLALCMWYISMPALTSGIPPQT.

8 helical membrane passes run Phe-2 to Leu-22, Thr-76 to Ile-96, Phe-98 to Trp-118, Ile-140 to Phe-160, His-171 to Ala-191, Ala-217 to Leu-237, Glu-253 to Ile-273, and Leu-294 to Ile-314.

The protein belongs to the complex I subunit 1 family. In terms of assembly, core subunit of respiratory chain NADH dehydrogenase (Complex I) which is composed of 45 different subunits.

It is found in the mitochondrion inner membrane. It carries out the reaction a ubiquinone + NADH + 5 H(+)(in) = a ubiquinol + NAD(+) + 4 H(+)(out). In terms of biological role, core subunit of the mitochondrial membrane respiratory chain NADH dehydrogenase (Complex I) which catalyzes electron transfer from NADH through the respiratory chain, using ubiquinone as an electron acceptor. Essential for the catalytic activity and assembly of complex I. In Ateles paniscus (Black spider monkey), this protein is NADH-ubiquinone oxidoreductase chain 1 (MT-ND1).